Consider the following 54-residue polypeptide: UPF0391 membrane protein Bpro_0879 (54 aa).

The next 2 membrane-spanning stretches (helical) occupy residues 6-26 and 30-50; these read VVFL…IAAG and IAKI…VMGL.

This sequence belongs to the UPF0391 family.

It is found in the cell membrane. This chain is UPF0391 membrane protein Bpro_0879, found in Polaromonas sp. (strain JS666 / ATCC BAA-500).